A 165-amino-acid polypeptide reads, in one-letter code: Small ribosomal subunit protein bS16 (165 aa).

The tract at residues 84–165 (WTHGNNPEKG…EAPAEEAAEG (82 aa)) is disordered. The span at 89–130 (NPEKGKPGKKAQERLAERAQREEERKQAEADAKAAAEAEKAA) shows a compositional bias: basic and acidic residues. The segment covering 131–157 (AAEAAAAAAAAPAVEEAPAEEAPAAEA) has biased composition (low complexity).

Belongs to the bacterial ribosomal protein bS16 family.

In Caulobacter vibrioides (strain ATCC 19089 / CIP 103742 / CB 15) (Caulobacter crescentus), this protein is Small ribosomal subunit protein bS16.